Here is a 216-residue protein sequence, read N- to C-terminus: MDEQEIREEVALAERRATLYWWFASMLCRELDSDQLNTLCSESGRVLLDALAEEPSLAPGCQKLRRALAGVQVLATPQLELAADYATAFLGDHLGSAPPYASVYVEPGGMMFQHPHQQMVQWLQQWQLAVSFDGNEPADHFAIMLDLMGNLVLKGVDSPEAQSAQSALLAEMLPPMRRWVTQCQRQPGFYAALAELLLAFVSLDQTLIEGEFSLAQ.

It belongs to the TorD/DmsD family. TorD subfamily.

Its subcellular location is the cytoplasm. Functionally, involved in the biogenesis of TorA. Acts on TorA before the insertion of the molybdenum cofactor and, as a result, probably favors a conformation of the apoenzyme that is competent for acquiring the cofactor. The polypeptide is Chaperone protein TorD (Ferrimonas balearica (strain DSM 9799 / CCM 4581 / KCTC 23876 / PAT)).